The primary structure comprises 336 residues: MSAQIIAIDAMGGDFGPRSIVQASIACLSATPSLHLTLVGQPSLLEDLVSGLAAADRARLQIVAASEVIGMDERPSQALRGKPDSSMRIALELVRDGKAQACVSAGNTGALMALSRFVLKTLPGIDRPAMVAAIPTQAGYCQLLDLGANVDCSAENLYQFAVMGSVAAQALGVHRPRVALLNIGTEDIKGNQQVKLAASLLQNARGLNYVGFVEGDGLYRGEADVVVCDGFVGNILLKSSEGLATMIGARIEQLFKGGVLSRAAGAVAMPLLKRLQADLAPARHNGASFLGLQGIVIKSHGSAGVQGFQSAIQRALIEIQENLPQRLHGRLEDLLL.

This sequence belongs to the PlsX family. In terms of assembly, homodimer. Probably interacts with PlsY.

The protein localises to the cytoplasm. The catalysed reaction is a fatty acyl-[ACP] + phosphate = an acyl phosphate + holo-[ACP]. The protein operates within lipid metabolism; phospholipid metabolism. Functionally, catalyzes the reversible formation of acyl-phosphate (acyl-PO(4)) from acyl-[acyl-carrier-protein] (acyl-ACP). This enzyme utilizes acyl-ACP as fatty acyl donor, but not acyl-CoA. The protein is Phosphate acyltransferase of Pseudomonas putida (strain GB-1).